A 157-amino-acid chain; its full sequence is N5-carboxyaminoimidazole ribonucleotide mutase (157 aa).

3 residues coordinate substrate: Ser-8, Asp-11, and Arg-38.

Belongs to the AIR carboxylase family. Class I subfamily.

The enzyme catalyses 5-carboxyamino-1-(5-phospho-D-ribosyl)imidazole + H(+) = 5-amino-1-(5-phospho-D-ribosyl)imidazole-4-carboxylate. It participates in purine metabolism; IMP biosynthesis via de novo pathway; 5-amino-1-(5-phospho-D-ribosyl)imidazole-4-carboxylate from 5-amino-1-(5-phospho-D-ribosyl)imidazole (N5-CAIR route): step 2/2. Functionally, catalyzes the conversion of N5-carboxyaminoimidazole ribonucleotide (N5-CAIR) to 4-carboxy-5-aminoimidazole ribonucleotide (CAIR). In Methanocaldococcus jannaschii (strain ATCC 43067 / DSM 2661 / JAL-1 / JCM 10045 / NBRC 100440) (Methanococcus jannaschii), this protein is N5-carboxyaminoimidazole ribonucleotide mutase.